We begin with the raw amino-acid sequence, 350 residues long: Twinfilin-1 (350 aa).

Position 2 is an N-acetylserine (S2). One can recognise an ADF-H 1 domain in the interval 2–139; it reads SHQTGIQASE…SLHGYKKYLL (138 aa). Phosphoserine is present on residues S143 and S277. The 139-residue stretch at 175–313 folds into the ADF-H 2 domain; it reads LQGVAFPISR…TADFLYDEVH (139 aa). A Phosphotyrosine modification is found at Y309. The tract at residues 317 to 350 is disordered; the sequence is HAHKQSFAKPKGPAGKRGIRRLIRGPAEAEATTD. T349 is subject to Phosphothreonine.

It belongs to the actin-binding proteins ADF family. Twinfilin subfamily. As to quaternary structure, interacts with G-actin; ADP-actin form and capping protein (CP). May also be able to interact with TWF2 and phosphoinositides, PI(4,5)P2. When bound to PI(4,5)P2, it is down-regulated. Interacts with ACTG1. Phosphorylated on serine and threonine residues. As to expression, widely expressed with highest levels in brain, liver and kidney. Also expressed in heart, lung and testis. Not detected in spleen or skeletal muscle.

The protein resides in the cytoplasm. It localises to the cytoskeleton. In terms of biological role, actin-binding protein involved in motile and morphological processes. Inhibits actin polymerization, likely by sequestering G-actin. By capping the barbed ends of filaments, it also regulates motility. Seems to play an important role in clathrin-mediated endocytosis and distribution of endocytic organelles. This Mus musculus (Mouse) protein is Twinfilin-1 (Twf1).